The following is a 246-amino-acid chain: Non-structural protein ORF4b (246 aa).

Residues 1-28 (MEESLMDVPSTSGTQVYSRKARKRSHSP) form a disordered region. Over residues 19-28 (RKARKRSHSP) the composition is skewed to basic residues. A Nuclear localization motif motif is present at residues 22-38 (RKRSHSPTKKLRYVKRR).

In terms of assembly, interacts with host KPNA4; this interaction inhibits the nuclear import of NF-kappa-B complex.

The protein resides in the host nucleus. The protein localises to the host nucleolus. It localises to the host cytoplasm. Functionally, plays a role in the inhibition of host innate immunity by inhibiting the interaction between host IKBKE and MAVS. In turn, this inhibition prevents the production of host interferon beta. Additionally, inhibits host NF-kappa-B by interacting with host KPNA4 and thereby preventing the translocation of the NF-kappa-B complex into the nucleus by this importin. The sequence is that of Non-structural protein ORF4b (ORF4b) from Camelus dromedarius (Dromedary).